Reading from the N-terminus, the 193-residue chain is Potassium-transporting ATPase KdpC subunit (193 aa).

The helical transmembrane segment at 7-27 (PALVLFAALTLLTGVAYPLAV) threads the bilayer.

Belongs to the KdpC family. The system is composed of three essential subunits: KdpA, KdpB and KdpC.

Its subcellular location is the cell inner membrane. Its function is as follows. Part of the high-affinity ATP-driven potassium transport (or Kdp) system, which catalyzes the hydrolysis of ATP coupled with the electrogenic transport of potassium into the cytoplasm. This subunit acts as a catalytic chaperone that increases the ATP-binding affinity of the ATP-hydrolyzing subunit KdpB by the formation of a transient KdpB/KdpC/ATP ternary complex. In Rhodospirillum rubrum (strain ATCC 11170 / ATH 1.1.1 / DSM 467 / LMG 4362 / NCIMB 8255 / S1), this protein is Potassium-transporting ATPase KdpC subunit.